The sequence spans 2157 residues: Polyketide synthase 2 (2157 aa).

The interval 7–244 (FIFGDQTGGF…IPIPIWAPYH (238 aa)) is N-terminal acylcarrier protein transacylase domain (SAT). The 434-residue stretch at 374–807 (DSKIAIIGMS…GGNSALLLED (434 aa)) folds into the Ketosynthase family 3 (KS3) domain. Active-site for beta-ketoacyl synthase activity residues include C546, H681, and H723. Residues 908–1213 (GFVFSGQGAQ…ASLHRKDDGW (306 aa)) form a malonyl-CoA:ACP transacylase (MAT) domain region. S998 serves as the catalytic For acyl/malonyl transferase activity. The tract at residues 1290–1605 (TSSVQKIIRQ…RSLLNKVLPP (316 aa)) is product template (PT) domain. An N-terminal hotdog fold region spans residues 1294 to 1428 (QKIIRQTDGP…CLLRFADPTS (135 aa)). Positions 1294 to 1600 (QKIIRQTDGP…FLGMSRSLLN (307 aa)) constitute a PKS/mFAS DH domain. H1327 (proton acceptor; for dehydratase activity) is an active-site residue. The segment at 1455 to 1600 (TDSLLSRGIV…FLGMSRSLLN (146 aa)) is C-terminal hotdog fold. D1514 (proton donor; for dehydratase activity) is an active-site residue. The disordered stretch occupies residues 1626–1652 (AASAKDTERRPLDIPTRAQRQPSSAQT). A compositionally biased stretch (polar residues) spans 1643–1652 (AQRQPSSAQT). One can recognise a Carrier 1 domain in the interval 1649–1726 (SAQTGTMGRI…ELKAFLGADQ (78 aa)). O-(pantetheine 4'-phosphoryl)serine is present on S1686. The disordered stretch occupies residues 1733-1762 (ACESSNGQHTPQTSDKGSGTLAVQKTDDDT). Over residues 1735 to 1755 (ESSNGQHTPQTSDKGSGTLAV) the composition is skewed to polar residues. The Carrier 2 domain occupies 1765-1839 (DMTLNRVCAI…SLQKALCGSE (75 aa)). S1799 carries the O-(pantetheine 4'-phosphoryl)serine modification. The disordered stretch occupies residues 1840–1859 (AASNGAPEANETTPSSHRLE). Positions 1875 to 2151 (ASPPHATSIL…MIEMGNLIGE (277 aa)) are thioesterase (TE) domain. S1981 serves as the catalytic For thioesterase activity.

Its function is as follows. Polyketide synthase; part of the Pks2 gene cluster that mediates the formation of infectious structures (appressoria), enabling these fungi to kill insects faster. The product of the Pks2 gene cluster is different from the one of Pks1 and has still not been identified. The chain is Polyketide synthase 2 from Metarhizium robertsii (strain ARSEF 23 / ATCC MYA-3075) (Metarhizium anisopliae (strain ARSEF 23)).